The following is a 1612-amino-acid chain: Roundabout homolog 1 (1612 aa).

Residues 1 to 19 form the signal peptide; that stretch reads MIAEPAHFYLFGLICLCSG. The Extracellular portion of the chain corresponds to 20–858; that stretch reads SRLRQEDFPP…QQISDVVRQP (839 aa). 5 consecutive Ig-like C2-type domains span residues 29-125, 131-218, 223-307, 312-407, and 416-502; these read PRIV…ASLE, DDFR…AELT, PSFV…ATLT, PHFV…LEVT, and PVIR…AYIE. Cysteines 50 and 108 form a disulfide. An N-linked (GlcNAc...) asparagine glycan is attached at N121. Cystine bridges form between C152-C201, C244-C291, and C333-C389. N424 carries an N-linked (GlcNAc...) asparagine glycan. The cysteines at positions 437 and 486 are disulfide-linked. Fibronectin type-III domains are found at residues 524 to 618, 637 to 734, and 739 to 835; these read APSK…TQDV, VVLH…TLEE, and PPRS…LDSH. N751, N781, and N788 each carry an N-linked (GlcNAc...) asparagine glycan. A helical transmembrane segment spans residues 859–879; sequence AFIAGIGAACWIILMVFSIWL. Residues 880 to 1612 are Cytoplasmic-facing; that stretch reads YRHRKKRNGL…NNEELEETES (733 aa). S901 carries the phosphoserine modification. Position 909 is a phosphothreonine (T909). The residue at position 999 (Y999) is a Phosphotyrosine. A Phosphoserine modification is found at S1016. A Phosphotyrosine modification is found at Y1034. Residues 1045–1068 form a disordered region; sequence SNNMNNGAGDSSEKHWKPPGQQKP. A Phosphotyrosine modification is found at Y1075. Disordered regions lie at residues 1088–1298, 1313–1358, and 1381–1612; these read RAND…ADME, EQTP…DGSF, and RRQM…ETES. Residues 1098-1107 are compositionally biased toward polar residues; sequence PYNQSYDQNT. Positions 1108 to 1124 are enriched in low complexity; it reads GGSYNSSDRGSSTSGSQ. Over residues 1147-1157 the composition is skewed to pro residues; it reads LPPPPAHPPPH. Position 1201 is a phosphothreonine (T1201). A compositionally biased stretch (polar residues) spans 1216–1230; it reads YSHQSTATLTPSPQE. Basic and acidic residues predominate over residues 1242 to 1254; that stretch reads DLGHMPHPPDRRR. The segment covering 1257–1268 has biased composition (pro residues); sequence VSPPPPPRPISP. S1258 is subject to Phosphoserine. Residues 1283-1297 show a composition bias toward acidic residues; that stretch reads MDTDAPEEEEDEADM. The span at 1345-1358 shows a compositional bias: low complexity; sequence SSGRSSVSSSDGSF. Polar residues predominate over residues 1399 to 1412; sequence PRPTSPVSTDSNMS. A compositionally biased stretch (basic residues) spans 1420-1431; the sequence is RPAKKQKHQPGH. The span at 1441–1451 shows a compositional bias: pro residues; sequence LPPPPVPPPAI. 2 stretches are compositionally biased toward basic and acidic residues: residues 1477–1502 and 1510–1534; these read ARTD…RQVT and DPRE…RDLP. Residues 1553-1562 show a composition bias toward polar residues; it reads FPTSNNPRDP. Residues 1563–1575 show a composition bias toward low complexity; the sequence is SSSSSMSSRGSGS. Residues 1603–1612 show a composition bias toward acidic residues; sequence NNEELEETES.

This sequence belongs to the immunoglobulin superfamily. ROBO family. In terms of assembly, homodimer. Dimerization is mediated by the extracellular domain and is independent of SLIT liganding. Interacts with SLIT1 Interacts with SLIT2. Interacts with FLRT3. Interacts with MYO9B (via Rho-GAP domain). Ubiquitinated. May be deubiquitinated by USP33. As to expression, detected in embryonic thalamus neurons (at protein level). Expressed in embryonal spinal cord. Expressed in embryonal lung, and in adult lung bronchial epithelial cells of large proximal airways.

The protein localises to the cell membrane. It localises to the cell projection. The protein resides in the axon. Its subcellular location is the endoplasmic reticulum-Golgi intermediate compartment membrane. Functionally, receptor for SLIT1 and SLIT2 that mediates cellular responses to molecular guidance cues in cellular migration, including axonal navigation at the ventral midline of the neural tube and projection of axons to different regions during neuronal development. Interaction with the intracellular domain of FLRT3 mediates axon attraction towards cells expressing NTN1. In axon growth cones, the silencing of the attractive effect of NTN1 by SLIT2 may require the formation of a ROBO1-DCC complex. Plays a role in the regulation of cell migration via its interaction with MYO9B; inhibits MYO9B-mediated stimulation of RHOA GTPase activity, and thereby leads to increased levels of active, GTP-bound RHOA. May be required for lung development. This Mus musculus (Mouse) protein is Roundabout homolog 1 (Robo1).